The following is a 320-amino-acid chain: Tyrosine recombinase XerC (320 aa).

The Core-binding (CB) domain maps to 14 to 104 (ADVREAVASW…SLRSFARHLE (91 aa)). The 187-residue stretch at 125–311 (RLPRPLPVAA…DSARLMSAFE (187 aa)) folds into the Tyr recombinase domain. Active-site residues include Arg170, Lys195, His263, Arg266, and His289. The active-site O-(3'-phospho-DNA)-tyrosine intermediate is the Tyr298.

Belongs to the 'phage' integrase family. XerC subfamily. In terms of assembly, forms a cyclic heterotetrameric complex composed of two molecules of XerC and two molecules of XerD.

The protein localises to the cytoplasm. Site-specific tyrosine recombinase, which acts by catalyzing the cutting and rejoining of the recombining DNA molecules. The XerC-XerD complex is essential to convert dimers of the bacterial chromosome into monomers to permit their segregation at cell division. It also contributes to the segregational stability of plasmids. In Methylobacterium sp. (strain 4-46), this protein is Tyrosine recombinase XerC.